Here is a 275-residue protein sequence, read N- to C-terminus: Vitamin B12-binding protein (275 aa).

The signal sequence occupies residues 1-19 (MMNKICLYLPLFFSSLTMA). Positions 25–272 (RVISLAPHAT…EVCEHFESVK (248 aa)) constitute a Fe/B12 periplasmic-binding domain. An intrachain disulfide couples C185 to C265.

The protein belongs to the BtuF family. In terms of assembly, the complex is composed of two ATP-binding proteins (BtuD), two transmembrane proteins (BtuC) and a solute-binding protein (BtuF).

The protein localises to the periplasm. Part of the ABC transporter complex BtuCDF involved in vitamin B12 import. Binds vitamin B12 and delivers it to the periplasmic surface of BtuC. This is Vitamin B12-binding protein from Vibrio parahaemolyticus serotype O3:K6 (strain RIMD 2210633).